Here is a 292-residue protein sequence, read N- to C-terminus: Aspartate carbamoyltransferase catalytic subunit (292 aa).

Carbamoyl phosphate is bound by residues Arg-49 and Thr-50. Residue Lys-77 participates in L-aspartate binding. The carbamoyl phosphate site is built by Arg-99, His-127, and Gln-130. L-aspartate is bound by residues Arg-161 and Arg-211. 2 residues coordinate carbamoyl phosphate: Gly-250 and Pro-251.

Belongs to the aspartate/ornithine carbamoyltransferase superfamily. ATCase family. As to quaternary structure, heterododecamer (2C3:3R2) of six catalytic PyrB chains organized as two trimers (C3), and six regulatory PyrI chains organized as three dimers (R2).

It carries out the reaction carbamoyl phosphate + L-aspartate = N-carbamoyl-L-aspartate + phosphate + H(+). It functions in the pathway pyrimidine metabolism; UMP biosynthesis via de novo pathway; (S)-dihydroorotate from bicarbonate: step 2/3. Functionally, catalyzes the condensation of carbamoyl phosphate and aspartate to form carbamoyl aspartate and inorganic phosphate, the committed step in the de novo pyrimidine nucleotide biosynthesis pathway. The protein is Aspartate carbamoyltransferase catalytic subunit of Campylobacter lari (strain RM2100 / D67 / ATCC BAA-1060).